Here is a 222-residue protein sequence, read N- to C-terminus: Glutathione S-transferase U21 (222 aa).

A GST N-terminal domain is found at 3-83 (AEVILLGFWP…YIDEVWSDNN (81 aa)). Glutathione contacts are provided by residues 13-14 (SM), 40-41 (NK), 54-55 (TI), and 67-68 (ES). The region spanning 89 to 211 (DPYHRAQALF…LPDSEKVVGY (123 aa)) is the GST C-terminal domain.

It belongs to the GST superfamily. Tau family.

The protein localises to the cytoplasm. Its subcellular location is the cytosol. The catalysed reaction is RX + glutathione = an S-substituted glutathione + a halide anion + H(+). In terms of biological role, may be involved in the conjugation of reduced glutathione to a wide number of exogenous and endogenous hydrophobic electrophiles and have a detoxification role against certain herbicides. This Arabidopsis thaliana (Mouse-ear cress) protein is Glutathione S-transferase U21 (GSTU21).